A 324-amino-acid chain; its full sequence is Clavaminate synthase 1 (324 aa).

H144, E146, and H279 together coordinate Fe cation. R293 provides a ligand contact to 2-oxoglutarate.

The protein belongs to the clavaminate synthase family. Fe(2+) serves as cofactor.

The catalysed reaction is deoxyamidinoproclavaminate + 2-oxoglutarate + O2 = amidinoproclavaminate + succinate + CO2. The enzyme catalyses proclavaminate + 2-oxoglutarate + O2 = dihydroclavaminate + succinate + CO2 + H2O. It carries out the reaction dihydroclavaminate + 2-oxoglutarate + O2 = clavaminate + succinate + CO2 + H2O. It participates in antibiotic biosynthesis; clavulanate biosynthesis; clavulanate from D-glyceraldehyde 3-phosphate and L-arginine: step 3/8. It functions in the pathway antibiotic biosynthesis; clavulanate biosynthesis; clavulanate from D-glyceraldehyde 3-phosphate and L-arginine: step 5/8. Its pathway is antibiotic biosynthesis; clavulanate biosynthesis; clavulanate from D-glyceraldehyde 3-phosphate and L-arginine: step 6/8. This is Clavaminate synthase 1 (cs1) from Streptomyces clavuligerus.